Consider the following 232-residue polypeptide: 6-phosphogluconolactonase (232 aa).

The protein belongs to the glucosamine/galactosamine-6-phosphate isomerase family. 6-phosphogluconolactonase subfamily.

It catalyses the reaction 6-phospho-D-glucono-1,5-lactone + H2O = 6-phospho-D-gluconate + H(+). It functions in the pathway carbohydrate degradation; pentose phosphate pathway; D-ribulose 5-phosphate from D-glucose 6-phosphate (oxidative stage): step 2/3. Functionally, hydrolysis of 6-phosphogluconolactone to 6-phosphogluconate. The protein is 6-phosphogluconolactonase (pgl) of Haemophilus influenzae (strain ATCC 51907 / DSM 11121 / KW20 / Rd).